The following is a 343-amino-acid chain: Phosphoribosylformylglycinamidine cyclo-ligase (343 aa).

This sequence belongs to the AIR synthase family.

It is found in the cytoplasm. It carries out the reaction 2-formamido-N(1)-(5-O-phospho-beta-D-ribosyl)acetamidine + ATP = 5-amino-1-(5-phospho-beta-D-ribosyl)imidazole + ADP + phosphate + H(+). It participates in purine metabolism; IMP biosynthesis via de novo pathway; 5-amino-1-(5-phospho-D-ribosyl)imidazole from N(2)-formyl-N(1)-(5-phospho-D-ribosyl)glycinamide: step 2/2. In Parasynechococcus marenigrum (strain WH8102), this protein is Phosphoribosylformylglycinamidine cyclo-ligase.